The following is a 132-amino-acid chain: Small ribosomal subunit protein uS8 (132 aa).

The protein belongs to the universal ribosomal protein uS8 family. In terms of assembly, part of the 30S ribosomal subunit. Contacts proteins S5 and S12.

One of the primary rRNA binding proteins, it binds directly to 16S rRNA central domain where it helps coordinate assembly of the platform of the 30S subunit. This Caldicellulosiruptor bescii (strain ATCC BAA-1888 / DSM 6725 / KCTC 15123 / Z-1320) (Anaerocellum thermophilum) protein is Small ribosomal subunit protein uS8.